A 358-amino-acid polypeptide reads, in one-letter code: Protein UL24 (358 aa).

The protein belongs to the herpesviridae US22 family.

It localises to the virion tegument. The protein is Protein UL24 (UL24) of Homo sapiens (Human).